The sequence spans 390 residues: Leucine aminopeptidase 1 (390 aa).

The signal sequence occupies residues 1–18; the sequence is MKLSTALVLGATATGAWS. A propeptide spanning residues 19-90 is cleaved from the precursor; the sequence is YAIPQLEQEV…FPTLDAGSYV (72 aa). Asparagine 120 carries N-linked (GlcNAc...) asparagine glycosylation. The Zn(2+) site is built by histidine 190, aspartate 209, glutamate 248, and aspartate 275. Cysteine 324 and cysteine 328 are disulfide-bonded. A Zn(2+)-binding site is contributed by histidine 357.

It belongs to the peptidase M28 family. M28E subfamily. Monomer. Zn(2+) serves as cofactor.

The protein localises to the secreted. Functionally, extracellular aminopeptidase that allows assimilation of proteinaceous substrates. This Emericella nidulans (strain FGSC A4 / ATCC 38163 / CBS 112.46 / NRRL 194 / M139) (Aspergillus nidulans) protein is Leucine aminopeptidase 1 (lap1).